Here is a 467-residue protein sequence, read N- to C-terminus: Abscisic acid 8'-hydroxylase 1 (467 aa).

A helical membrane pass occupies residues 5 to 24; the sequence is ALFLTLFAGSLFLYFLRCLI. C411 lines the heme pocket.

This sequence belongs to the cytochrome P450 family. Heme is required as a cofactor. Mainly expressed in flowers, siliques, roots and stems. Lower expression in rosette leaves and dry seeds. Expressed in vascular tissues of embryo during the seed development.

The protein localises to the membrane. The enzyme catalyses 2-cis-(+)-abscisate + reduced [NADPH--hemoprotein reductase] + O2 = (+)-8'-hydroxyabscisate + oxidized [NADPH--hemoprotein reductase] + H2O + H(+). It functions in the pathway plant hormone degradation; abscisic acid degradation. Functionally, involved in the oxidative degradation of abscisic acid. Plays an important role in determining abscisic acid levels in dry seeds and in the control of postgermination growth. In Arabidopsis thaliana (Mouse-ear cress), this protein is Abscisic acid 8'-hydroxylase 1 (CYP707A1).